A 564-amino-acid chain; its full sequence is Laccase-22 (564 aa).

The first 25 residues, 1 to 25, serve as a signal peptide directing secretion; the sequence is MAVLPESRRLSLLLMAACFLLQALS. Plastocyanin-like domains follow at residues 36 to 152 and 162 to 314; these read NVVM…PKLG and KEAV…YANT. N-linked (GlcNAc...) asparagine glycosylation is found at Asn-41 and Asn-82. His-86 and His-88 together coordinate Cu cation. N-linked (GlcNAc...) asparagine glycosylation occurs at Asn-118. Residues His-131 and His-133 each coordinate Cu cation. 8 N-linked (GlcNAc...) asparagine glycosylation sites follow: Asn-191, Asn-302, Asn-331, Asn-379, Asn-389, Asn-424, Asn-437, and Asn-447. The Plastocyanin-like 3 domain occupies 414–548; sequence DFPATPLHKF…KMAFVVDNGK (135 aa). Positions 465, 468, 470, 527, 528, 529, and 533 each coordinate Cu cation.

The protein belongs to the multicopper oxidase family. The cofactor is Cu cation.

Its subcellular location is the secreted. The protein resides in the extracellular space. It is found in the apoplast. The catalysed reaction is 4 hydroquinone + O2 = 4 benzosemiquinone + 2 H2O. Its function is as follows. Lignin degradation and detoxification of lignin-derived products. This Oryza sativa subsp. japonica (Rice) protein is Laccase-22 (LAC22).